The following is a 330-amino-acid chain: MISFSSFYKQISDSSLQHWLETLPAILGEWQREHKHGSLPKWEKVLNKLHYPQPDTIDFTTSVTIGSGEQLSAGEREKLENLLAIFKPWRKGPYSIHGVEIDTEWRSDWKWERIAPHISPLANRTVLDVGCGSGYHMWRMLGEGAKHVVGIDPSPMFMCQFEAVKRIAGNEHPVHFLPLGIEELPPLDAFDTVFSMGVLYHRRSPIDHLIQLRDQLRTGGELVLETLVIDGDENTVLVPEDRYGKMNNVWFLPSVKALMLWLKKSDFIDIRCVDVDVTSLAEQRSTHWMPNESLVDYLDPNDVSLTVEGYPAPKRATIIATKNQPNKETK.

Carboxy-S-adenosyl-L-methionine-binding positions include K91, W105, K110, G130, 152–154 (DPS), 181–182 (IE), M196, Y200, and R315.

This sequence belongs to the class I-like SAM-binding methyltransferase superfamily. CmoB family. In terms of assembly, homotetramer.

The enzyme catalyses carboxy-S-adenosyl-L-methionine + 5-hydroxyuridine(34) in tRNA = 5-carboxymethoxyuridine(34) in tRNA + S-adenosyl-L-homocysteine + H(+). Functionally, catalyzes carboxymethyl transfer from carboxy-S-adenosyl-L-methionine (Cx-SAM) to 5-hydroxyuridine (ho5U) to form 5-carboxymethoxyuridine (cmo5U) at position 34 in tRNAs. The sequence is that of tRNA U34 carboxymethyltransferase from Shewanella piezotolerans (strain WP3 / JCM 13877).